Consider the following 118-residue polypeptide: DNA-binding protein inhibitor ID-3 (118 aa).

In terms of domain architecture, bHLH spans 32–84; it reads SHKGPGVDEPMGLLYDMNGCYSKLKELVPGIPQGSKLSQVEILQHVIDYIFDL.

As to quaternary structure, homodimer. Heterodimer with other HLH proteins. Interacts (via HLH domain) with the bHLH protein hes4/hairy2 (via Orange domain). Interacts with stat3.

The protein localises to the nucleus. Its function is as follows. Transcriptional regulator (lacking a basic DNA binding domain) which negatively regulates the basic helix-loop-helix (bHLH) transcription factors by forming heterodimers and inhibiting their DNA binding and transcriptional activity. Influences cell fate decisions in the embryo by sequestering and blocking the activity of the bHLH transcription factors that control these decisions. Inhibits the binding of myogenic bHLH-containing complexes to E-box DNA, thereby preventing activation of muscle-specific target genes. Also inhibits the activity of neurogenic factor neurod1/neuroD. Plays a role in cell cycle progression and survival of neural crest progenitors; binding to either hes4-B/hairy2b or stat3 blocks the formation of transcription factor complexes and the repressor function of hes4-B/hairy2B, to allow neural crest progenitors to differentiate. May play a role in the regulation of the circadian rhythm. The protein is DNA-binding protein inhibitor ID-3 (id3) of Xenopus tropicalis (Western clawed frog).